Consider the following 138-residue polypeptide: Small ribosomal subunit protein uS11c (138 aa).

The segment at 1-22 (MAKPILRIGSRKNTRSGSRKNV) is disordered. A compositionally biased stretch (basic residues) spans 9-22 (GSRKNTRSGSRKNV).

The protein belongs to the universal ribosomal protein uS11 family. In terms of assembly, part of the 30S ribosomal subunit.

The protein localises to the plastid. It localises to the chloroplast. The chain is Small ribosomal subunit protein uS11c from Arabis hirsuta (Hairy rock-cress).